The sequence spans 162 residues: Urease accessory protein UreE 1 (162 aa).

The tract at residues 143-162 (SGGHQHHHGHDHDHHHPDHE) is disordered. The segment covering 152 to 162 (HDHDHHHPDHE) has biased composition (basic and acidic residues).

This sequence belongs to the UreE family.

The protein resides in the cytoplasm. Functionally, involved in urease metallocenter assembly. Binds nickel. Probably functions as a nickel donor during metallocenter assembly. The polypeptide is Urease accessory protein UreE 1 (Brucella suis biovar 1 (strain 1330)).